We begin with the raw amino-acid sequence, 334 residues long: Holliday junction branch migration complex subunit RuvB (334 aa).

The tract at residues 1-182 is large ATPase domain (RuvB-L); the sequence is MNERMVDQSM…FGVHLRLEYY (182 aa). ATP contacts are provided by residues Leu21, Arg22, Gly63, Lys66, Thr67, Thr68, 129-131, Arg172, Tyr182, and Arg219; that span reads EDF. Thr67 lines the Mg(2+) pocket. The small ATPAse domain (RuvB-S) stretch occupies residues 183-253; sequence NESDLKEIII…TTKHALGLLQ (71 aa). The interval 256–334 is head domain (RuvB-H); sequence QHGLDYIDHK…HFAKSNEERE (79 aa). DNA-binding residues include Arg292, Arg311, and Arg316.

This sequence belongs to the RuvB family. Homohexamer. Forms an RuvA(8)-RuvB(12)-Holliday junction (HJ) complex. HJ DNA is sandwiched between 2 RuvA tetramers; dsDNA enters through RuvA and exits via RuvB. An RuvB hexamer assembles on each DNA strand where it exits the tetramer. Each RuvB hexamer is contacted by two RuvA subunits (via domain III) on 2 adjacent RuvB subunits; this complex drives branch migration. In the full resolvosome a probable DNA-RuvA(4)-RuvB(12)-RuvC(2) complex forms which resolves the HJ.

It is found in the cytoplasm. It carries out the reaction ATP + H2O = ADP + phosphate + H(+). Its function is as follows. The RuvA-RuvB-RuvC complex processes Holliday junction (HJ) DNA during genetic recombination and DNA repair, while the RuvA-RuvB complex plays an important role in the rescue of blocked DNA replication forks via replication fork reversal (RFR). RuvA specifically binds to HJ cruciform DNA, conferring on it an open structure. The RuvB hexamer acts as an ATP-dependent pump, pulling dsDNA into and through the RuvAB complex. RuvB forms 2 homohexamers on either side of HJ DNA bound by 1 or 2 RuvA tetramers; 4 subunits per hexamer contact DNA at a time. Coordinated motions by a converter formed by DNA-disengaged RuvB subunits stimulates ATP hydrolysis and nucleotide exchange. Immobilization of the converter enables RuvB to convert the ATP-contained energy into a lever motion, pulling 2 nucleotides of DNA out of the RuvA tetramer per ATP hydrolyzed, thus driving DNA branch migration. The RuvB motors rotate together with the DNA substrate, which together with the progressing nucleotide cycle form the mechanistic basis for DNA recombination by continuous HJ branch migration. Branch migration allows RuvC to scan DNA until it finds its consensus sequence, where it cleaves and resolves cruciform DNA. This chain is Holliday junction branch migration complex subunit RuvB, found in Staphylococcus aureus (strain MRSA252).